The following is a 490-amino-acid chain: Betaine aldehyde dehydrogenase (490 aa).

2 residues coordinate K(+): I27 and D93. An NAD(+)-binding site is contributed by 150–152 (GAW). The active-site Charge relay system is the K162. Residue 176–179 (KPSE) participates in NAD(+) binding. V180 serves as a coordination point for K(+). Residue 230–233 (GTTT) participates in NAD(+) binding. L246 is a binding site for K(+). The active-site Proton acceptor is the E252. NAD(+) contacts are provided by G254, C286, and E387. Catalysis depends on C286, which acts as the Nucleophile. C286 is subject to Cysteine sulfenic acid (-SOH). K(+) contacts are provided by K457 and G460. E464 acts as the Charge relay system in catalysis.

It belongs to the aldehyde dehydrogenase family. Dimer of dimers. Requires K(+) as cofactor.

It carries out the reaction betaine aldehyde + NAD(+) + H2O = glycine betaine + NADH + 2 H(+). It participates in amine and polyamine biosynthesis; betaine biosynthesis via choline pathway; betaine from betaine aldehyde: step 1/1. Involved in the biosynthesis of the osmoprotectant glycine betaine. Catalyzes the irreversible oxidation of betaine aldehyde to the corresponding acid. The polypeptide is Betaine aldehyde dehydrogenase (Pseudomonas putida (strain ATCC 700007 / DSM 6899 / JCM 31910 / BCRC 17059 / LMG 24140 / F1)).